Consider the following 699-residue polypeptide: tRNA(Met) cytidine acetyltransferase TmcA (699 aa).

Residues Gln-178, 200 to 209, and Arg-322 each bind ATP; that span reads GRGKSTLAGM. One can recognise an N-acetyltransferase domain in the interval 408 to 547; it reads MHIASAQVAG…SGCYSAMAIL (140 aa). Acetyl-CoA contacts are provided by residues 475-477 and 482-488; these read IAV and RRQGIGR.

It belongs to the RNA cytidine acetyltransferase family. TmcA subfamily.

Its subcellular location is the cytoplasm. The enzyme catalyses cytidine(34) in elongator tRNA(Met) + acetyl-CoA + ATP + H2O = N(4)-acetylcytidine(34) in elongator tRNA(Met) + ADP + phosphate + CoA + H(+). Functionally, catalyzes the formation of N(4)-acetylcytidine (ac(4)C) at the wobble position of tRNA(Met), by using acetyl-CoA as an acetyl donor and ATP (or GTP). The sequence is that of tRNA(Met) cytidine acetyltransferase TmcA from Pectobacterium atrosepticum (strain SCRI 1043 / ATCC BAA-672) (Erwinia carotovora subsp. atroseptica).